The sequence spans 132 residues: Nickel-responsive regulator (132 aa).

Positions 76, 87, 89, and 95 each coordinate Ni(2+).

The protein belongs to the transcriptional regulatory CopG/NikR family. In terms of assembly, homotetramer. It depends on Ni(2+) as a cofactor.

Functionally, transcriptional repressor of the nikABCDE operon. Is active in the presence of excessive concentrations of intracellular nickel. This Klebsiella pneumoniae (strain 342) protein is Nickel-responsive regulator.